Here is a 91-residue protein sequence, read N- to C-terminus: DNA-binding protein HU (91 aa).

It belongs to the bacterial histone-like protein family.

Its function is as follows. Histone-like DNA-binding protein which is capable of wrapping DNA to stabilize it, and thus to prevent its denaturation under extreme environmental conditions. Also seems to act as a fortuitous virulence factor in delayed sequelae by binding to heparan sulfate-proteoglycans in the extracellular matrix of target organs and acting as a nidus for in situ immune complex formation. The chain is DNA-binding protein HU (hup) from Streptococcus downei (Streptococcus sobrinus).